The primary structure comprises 258 residues: Triosephosphate isomerase (258 aa).

Residue 11-13 participates in substrate binding; the sequence is NWK. Catalysis depends on His-101, which acts as the Electrophile. Glu-173 acts as the Proton acceptor in catalysis. Residues Gly-179, Ser-219, and 240-241 contribute to the substrate site; that span reads GG.

Belongs to the triosephosphate isomerase family. In terms of assembly, homodimer.

It is found in the cytoplasm. It carries out the reaction D-glyceraldehyde 3-phosphate = dihydroxyacetone phosphate. Its pathway is carbohydrate biosynthesis; gluconeogenesis. It participates in carbohydrate degradation; glycolysis; D-glyceraldehyde 3-phosphate from glycerone phosphate: step 1/1. Functionally, involved in the gluconeogenesis. Catalyzes stereospecifically the conversion of dihydroxyacetone phosphate (DHAP) to D-glyceraldehyde-3-phosphate (G3P). This is Triosephosphate isomerase from Streptomyces coelicolor (strain ATCC BAA-471 / A3(2) / M145).